A 182-amino-acid chain; its full sequence is Dynactin subunit 5 (182 aa).

An N-acetylmethionine modification is found at M1.

This sequence belongs to the dynactin subunits 5/6 family. Dynactin subunit 5 subfamily. Subunit of dynactin, a multiprotein complex part of a tripartite complex with dynein and a adapter, such as BICDL1, BICD2 or HOOK3. The dynactin complex is built around ACTR1A/ACTB filament and consists of an actin-related filament composed of a shoulder domain, a pointed end and a barbed end. Its length is defined by its flexible shoulder domain. The soulder is composed of 2 DCTN1 subunits, 4 DCTN2 and 2 DCTN3. The 4 DCNT2 (via N-terminus) bind the ACTR1A filament and act as molecular rulers to determine the length. The pointed end is important for binding dynein-dynactin cargo adapters. Consists of 4 subunits: ACTR10, DCNT4, DCTN5 and DCTN6. Within the complex DCTN6 forms a heterodimer with DCTN5. The barbed end is composed of a CAPZA1:CAPZB heterodimers, which binds ACTR1A/ACTB filament and dynactin and stabilizes dynactin. Interacts with N4BP2L1.

The protein resides in the cytoplasm. It localises to the cytoskeleton. It is found in the chromosome. Its subcellular location is the centromere. The protein localises to the kinetochore. Its function is as follows. Part of the dynactin complex that activates the molecular motor dynein for ultra-processive transport along microtubules. The chain is Dynactin subunit 5 (DCTN5) from Pongo abelii (Sumatran orangutan).